The sequence spans 364 residues: DNA polymerase IV (364 aa).

The UmuC domain maps to 14 to 198 (IIHIDMDAFF…LPIEKFHGVG (185 aa)). D18 and D116 together coordinate Mg(2+). E117 is a catalytic residue.

The protein belongs to the DNA polymerase type-Y family. In terms of assembly, monomer. Mg(2+) is required as a cofactor.

The protein localises to the cytoplasm. It carries out the reaction DNA(n) + a 2'-deoxyribonucleoside 5'-triphosphate = DNA(n+1) + diphosphate. Functionally, poorly processive, error-prone DNA polymerase involved in untargeted mutagenesis. Copies undamaged DNA at stalled replication forks, which arise in vivo from mismatched or misaligned primer ends. These misaligned primers can be extended by PolIV. Exhibits no 3'-5' exonuclease (proofreading) activity. May be involved in translesional synthesis, in conjunction with the beta clamp from PolIII. This chain is DNA polymerase IV, found in Streptococcus pyogenes serotype M18 (strain MGAS8232).